Here is a 404-residue protein sequence, read N- to C-terminus: Rhomboid-related protein 3 (404 aa).

2 EF-hand domains span residues 34-69 and 70-105; these read APED…HSSK and LDPH…KRSN. Transmembrane regions (helical) follow at residues 164–184, 218–238, 250–270, 274–294, 303–325, 338–358, and 371–391; these read WFMI…GVSL, IFMH…LLVG, IGLV…VADM, VVGS…NIVM, FKLL…AVWL, PSFV…VVVL, and WWIF…WNIF. The active-site Nucleophile is the serine 278. Histidine 343 is an active-site residue.

Belongs to the peptidase S54 family.

It localises to the membrane. It carries out the reaction Cleaves type-1 transmembrane domains using a catalytic dyad composed of serine and histidine that are contributed by different transmembrane domains.. May be involved in regulated intramembrane proteolysis and the subsequent release of functional polypeptides from their membrane anchors. The chain is Rhomboid-related protein 3 (RHBDL3) from Homo sapiens (Human).